The primary structure comprises 363 residues: Sulfate/thiosulfate import ATP-binding protein CysA (363 aa).

Residues isoleucine 3 to leucine 237 form the ABC transporter domain. An ATP-binding site is contributed by glycine 35–threonine 42.

Belongs to the ABC transporter superfamily. Sulfate/tungstate importer (TC 3.A.1.6) family. As to quaternary structure, the complex is composed of two ATP-binding proteins (CysA), two transmembrane proteins (CysT and CysW) and a solute-binding protein (CysP).

Its subcellular location is the cell inner membrane. It catalyses the reaction sulfate(out) + ATP + H2O = sulfate(in) + ADP + phosphate + H(+). The catalysed reaction is thiosulfate(out) + ATP + H2O = thiosulfate(in) + ADP + phosphate + H(+). In terms of biological role, part of the ABC transporter complex CysAWTP involved in sulfate/thiosulfate import. Responsible for energy coupling to the transport system. This chain is Sulfate/thiosulfate import ATP-binding protein CysA, found in Yersinia pestis.